The sequence spans 210 residues: ATP-dependent Clp protease proteolytic subunit (210 aa).

Catalysis depends on serine 107, which acts as the Nucleophile. Histidine 132 is an active-site residue.

The protein belongs to the peptidase S14 family. In terms of assembly, fourteen ClpP subunits assemble into 2 heptameric rings which stack back to back to give a disk-like structure with a central cavity, resembling the structure of eukaryotic proteasomes.

Its subcellular location is the cytoplasm. The catalysed reaction is Hydrolysis of proteins to small peptides in the presence of ATP and magnesium. alpha-casein is the usual test substrate. In the absence of ATP, only oligopeptides shorter than five residues are hydrolyzed (such as succinyl-Leu-Tyr-|-NHMec, and Leu-Tyr-Leu-|-Tyr-Trp, in which cleavage of the -Tyr-|-Leu- and -Tyr-|-Trp bonds also occurs).. In terms of biological role, cleaves peptides in various proteins in a process that requires ATP hydrolysis. Has a chymotrypsin-like activity. Plays a major role in the degradation of misfolded proteins. The polypeptide is ATP-dependent Clp protease proteolytic subunit (Cereibacter sphaeroides (strain ATCC 17029 / ATH 2.4.9) (Rhodobacter sphaeroides)).